A 492-amino-acid polypeptide reads, in one-letter code: GlcNAc-binding protein A (492 aa).

The first 23 residues, 1 to 23 (MNKSSTKTLIALSMMAVSSGVSA), serve as a signal peptide directing secretion. One can recognise a Chitin-binding type-4 domain in the interval 24 to 204 (HGYVSETNDG…AFYNVIDVKF (181 aa)). In terms of domain architecture, Chitin-binding type-3 spans 443–484 (AGTKVLAEDGNVYQCKEFPYSGYCVQWTETATNFAPGVGSDW).

This sequence belongs to the GbpA family.

The protein resides in the secreted. Probably interacts with GlcNAc residues. May promote attachment to both epithelial cell surfaces and chitin. The protein is GlcNAc-binding protein A of Aliivibrio fischeri (strain ATCC 700601 / ES114) (Vibrio fischeri).